The following is a 505-amino-acid chain: Lysine--tRNA ligase (505 aa).

Residues E415 and E422 each coordinate Mg(2+).

This sequence belongs to the class-II aminoacyl-tRNA synthetase family. In terms of assembly, homodimer. Mg(2+) serves as cofactor.

It is found in the cytoplasm. It catalyses the reaction tRNA(Lys) + L-lysine + ATP = L-lysyl-tRNA(Lys) + AMP + diphosphate. The polypeptide is Lysine--tRNA ligase (Pectobacterium atrosepticum (strain SCRI 1043 / ATCC BAA-672) (Erwinia carotovora subsp. atroseptica)).